Consider the following 314-residue polypeptide: Methionyl-tRNA formyltransferase (314 aa).

111 to 114 (SLLP) contributes to the (6S)-5,6,7,8-tetrahydrofolate binding site.

Belongs to the Fmt family.

It catalyses the reaction L-methionyl-tRNA(fMet) + (6R)-10-formyltetrahydrofolate = N-formyl-L-methionyl-tRNA(fMet) + (6S)-5,6,7,8-tetrahydrofolate + H(+). Functionally, attaches a formyl group to the free amino group of methionyl-tRNA(fMet). The formyl group appears to play a dual role in the initiator identity of N-formylmethionyl-tRNA by promoting its recognition by IF2 and preventing the misappropriation of this tRNA by the elongation apparatus. This chain is Methionyl-tRNA formyltransferase, found in Coxiella burnetii (strain CbuK_Q154) (Coxiella burnetii (strain Q154)).